A 309-amino-acid chain; its full sequence is Foldase protein PrsA (309 aa).

An N-terminal signal peptide occupies residues 1-22 (MKTRSKLAAGFLTLMSVATLAA). A lipid anchor (N-palmitoyl cysteine) is attached at cysteine 23. Cysteine 23 carries S-diacylglycerol cysteine lipidation. Residues 146–241 (TPETSVQVIK…TSYYIIKVTD (96 aa)) form the PpiC domain.

Belongs to the PrsA family.

It localises to the cell membrane. The catalysed reaction is [protein]-peptidylproline (omega=180) = [protein]-peptidylproline (omega=0). Plays a major role in protein secretion by helping the post-translocational extracellular folding of several secreted proteins. The protein is Foldase protein PrsA of Streptococcus agalactiae serotype III (strain NEM316).